We begin with the raw amino-acid sequence, 254 residues long: Type III pantothenate kinase (254 aa).

Residue 6–13 (DVGNTNTV) participates in ATP binding. Substrate contacts are provided by residues Y100 and 107-110 (GADR). D109 serves as the catalytic Proton acceptor. D129 contributes to the K(+) binding site. T132 contacts ATP. T184 is a substrate binding site.

Belongs to the type III pantothenate kinase family. Homodimer. It depends on NH4(+) as a cofactor. Requires K(+) as cofactor.

It is found in the cytoplasm. It carries out the reaction (R)-pantothenate + ATP = (R)-4'-phosphopantothenate + ADP + H(+). It functions in the pathway cofactor biosynthesis; coenzyme A biosynthesis; CoA from (R)-pantothenate: step 1/5. Its function is as follows. Catalyzes the phosphorylation of pantothenate (Pan), the first step in CoA biosynthesis. This Syntrophus aciditrophicus (strain SB) protein is Type III pantothenate kinase.